A 346-amino-acid polypeptide reads, in one-letter code: Melanoma-associated antigen B4 (346 aa).

A compositionally biased stretch (basic residues) spans methionine 1–threonine 18. The disordered stretch occupies residues methionine 1–aspartate 107. A compositionally biased stretch (polar residues) spans valine 45 to leucine 54. Positions alanine 92–threonine 101 are enriched in low complexity. The MAGE domain occupies leucine 109–alanine 307. Residues glutamate 311 to methionine 346 are disordered. The segment covering arginine 318–methionine 346 has biased composition (low complexity).

As to expression, expressed in testis.

The protein localises to the cytoplasm. This Homo sapiens (Human) protein is Melanoma-associated antigen B4 (MAGEB4).